A 181-amino-acid chain; its full sequence is Transmembrane protein 154 (181 aa).

Residues 1 to 22 form the signal peptide; that stretch reads MTVPCAALVLALGLAFGQSSQG. Residues 19 to 47 form a disordered region; that stretch reads SSQGNDEESEYSGQSITEEENSEDETTRS. Topologically, residues 23 to 74 are extracellular; the sequence is NDEESEYSGQSITEEENSEDETTRSALATVTTEALAENVNSTHTNDTSNQVE. A helical transmembrane segment spans residues 75 to 95; sequence FILMVAIPLAALLILLFMVLI. At 96 to 181 the chain is on the cytoplasmic side; it reads ATYFKSKRPK…PNPSPSDNES (86 aa). Residues 103-122 form a disordered region; that stretch reads RPKQEPSSQGSQSALQTHEL. A compositionally biased stretch (polar residues) spans 107–118; that stretch reads EPSSQGSQSALQ. Tyr-160 carries the phosphotyrosine modification. Residues 161 to 181 are disordered; it reads ECLPTLKEEKEPNPSPSDNES. Ser-177 carries the phosphoserine modification.

Its subcellular location is the membrane. This chain is Transmembrane protein 154 (Tmem154), found in Mus musculus (Mouse).